The primary structure comprises 510 residues: 2,3-bisphosphoglycerate-independent phosphoglycerate mutase (510 aa).

Residue aspartate 12 participates in Mn(2+) binding. Position 36 is a phosphotyrosine (tyrosine 36). Position 62 (serine 62) interacts with Mn(2+). Serine 62 functions as the Phosphoserine intermediate in the catalytic mechanism. Substrate-binding positions include histidine 123, 153–154 (RD), arginine 185, arginine 191, 261–264 (RPDR), and lysine 336. Positions 403, 407, 444, 445, and 462 each coordinate Mn(2+).

The protein belongs to the BPG-independent phosphoglycerate mutase family. As to quaternary structure, monomer. Mn(2+) serves as cofactor.

It catalyses the reaction (2R)-2-phosphoglycerate = (2R)-3-phosphoglycerate. It participates in carbohydrate degradation; glycolysis; pyruvate from D-glyceraldehyde 3-phosphate: step 3/5. Essential for rapid growth and for sporulation. Catalyzes the interconversion of 2-phosphoglycerate and 3-phosphoglycerate. This is 2,3-bisphosphoglycerate-independent phosphoglycerate mutase from Halalkalibacterium halodurans (strain ATCC BAA-125 / DSM 18197 / FERM 7344 / JCM 9153 / C-125) (Bacillus halodurans).